Here is a 155-residue protein sequence, read N- to C-terminus: Reticulon-like protein B23 (155 aa).

One can recognise a Reticulon domain in the interval M1 to D155. 2 consecutive transmembrane segments (helical) span residues S30 to F50 and I117 to F137.

The protein resides in the endoplasmic reticulum membrane. The chain is Reticulon-like protein B23 (RTNLB23) from Arabidopsis thaliana (Mouse-ear cress).